Here is a 319-residue protein sequence, read N- to C-terminus: Acetyl-coenzyme A carboxylase carboxyl transferase subunit alpha (319 aa).

Residues 35-296 (NIDEEVHRLR…KAQLLTDLAD (262 aa)) enclose the CoA carboxyltransferase C-terminal domain.

Belongs to the AccA family. In terms of assembly, acetyl-CoA carboxylase is a heterohexamer composed of biotin carboxyl carrier protein (AccB), biotin carboxylase (AccC) and two subunits each of ACCase subunit alpha (AccA) and ACCase subunit beta (AccD).

It localises to the cytoplasm. It carries out the reaction N(6)-carboxybiotinyl-L-lysyl-[protein] + acetyl-CoA = N(6)-biotinyl-L-lysyl-[protein] + malonyl-CoA. Its pathway is lipid metabolism; malonyl-CoA biosynthesis; malonyl-CoA from acetyl-CoA: step 1/1. Its function is as follows. Component of the acetyl coenzyme A carboxylase (ACC) complex. First, biotin carboxylase catalyzes the carboxylation of biotin on its carrier protein (BCCP) and then the CO(2) group is transferred by the carboxyltransferase to acetyl-CoA to form malonyl-CoA. This is Acetyl-coenzyme A carboxylase carboxyl transferase subunit alpha from Escherichia coli O45:K1 (strain S88 / ExPEC).